Reading from the N-terminus, the 890-residue chain is Translation initiation factor IF-2 (890 aa).

The tract at residues 50-304 is disordered; sequence LRQGSPEQEE…LQQEFERPTA (255 aa). Composition is skewed to basic and acidic residues over residues 112 to 125, 136 to 147, and 217 to 262; these read KRSD…RKQE, RALEQEEAKREE, and ALKE…QEAK. A tr-type G domain is found at 390-559; it reads GRAPVVTVMG…VLQAELQELK (170 aa). Residues 399–406 are G1; the sequence is GHVDHGKT. A GTP-binding site is contributed by 399-406; that stretch reads GHVDHGKT. The segment at 424 to 428 is G2; it reads GITQH. The tract at residues 445-448 is G3; that stretch reads DTPG. Residues 445–449 and 499–502 contribute to the GTP site; these read DTPGH and NKMD. Positions 499–502 are G4; that stretch reads NKMD. The segment at 535–537 is G5; that stretch reads SAM.

The protein belongs to the TRAFAC class translation factor GTPase superfamily. Classic translation factor GTPase family. IF-2 subfamily.

The protein localises to the cytoplasm. Its function is as follows. One of the essential components for the initiation of protein synthesis. Protects formylmethionyl-tRNA from spontaneous hydrolysis and promotes its binding to the 30S ribosomal subunits. Also involved in the hydrolysis of GTP during the formation of the 70S ribosomal complex. This chain is Translation initiation factor IF-2, found in Halorhodospira halophila (strain DSM 244 / SL1) (Ectothiorhodospira halophila (strain DSM 244 / SL1)).